The sequence spans 229 residues: UPF0758 protein Moth_0536 (229 aa).

The 123-residue stretch at 107–229 (VIRNPRDVAG…FTSLKERNLL (123 aa)) folds into the MPN domain. Positions 178, 180, and 191 each coordinate Zn(2+). The short motif at 178 to 191 (HNHPSGDPTPSQED) is the JAMM motif element.

It belongs to the UPF0758 family.

The sequence is that of UPF0758 protein Moth_0536 from Moorella thermoacetica (strain ATCC 39073 / JCM 9320).